Reading from the N-terminus, the 197-residue chain is Protein-methionine-sulfoxide reductase heme-binding subunit MsrQ (197 aa).

Helical transmembrane passes span 10–30, 42–62, 75–95, 110–130, 147–167, and 169–189; these read IFIV…MNLL, LGLG…LQKL, LGLW…FFIL, PYII…VTSN, LVYA…RSDL, and EWAI…PAVA.

The protein belongs to the MsrQ family. As to quaternary structure, heterodimer of a catalytic subunit (MsrP) and a heme-binding subunit (MsrQ). FMN serves as cofactor. It depends on heme b as a cofactor.

The protein localises to the cell inner membrane. Functionally, part of the MsrPQ system that repairs oxidized periplasmic proteins containing methionine sulfoxide residues (Met-O), using respiratory chain electrons. Thus protects these proteins from oxidative-stress damage caused by reactive species of oxygen and chlorine generated by the host defense mechanisms. MsrPQ is essential for the maintenance of envelope integrity under bleach stress, rescuing a wide series of structurally unrelated periplasmic proteins from methionine oxidation. MsrQ provides electrons for reduction to the reductase catalytic subunit MsrP, using the quinone pool of the respiratory chain. This chain is Protein-methionine-sulfoxide reductase heme-binding subunit MsrQ, found in Pseudomonas putida (strain ATCC 47054 / DSM 6125 / CFBP 8728 / NCIMB 11950 / KT2440).